Reading from the N-terminus, the 242-residue chain is uncharacterized protein (242 aa).

It localises to the cytoplasm. The protein localises to the nucleus. This is an uncharacterized protein from Schizosaccharomyces pombe (strain 972 / ATCC 24843) (Fission yeast).